The chain runs to 314 residues: Probable 5-dehydro-4-deoxyglucarate dehydratase (314 aa).

The protein belongs to the DapA family.

It carries out the reaction 5-dehydro-4-deoxy-D-glucarate + H(+) = 2,5-dioxopentanoate + CO2 + H2O. The protein operates within carbohydrate acid metabolism; D-glucarate degradation; 2,5-dioxopentanoate from D-glucarate: step 2/2. The chain is Probable 5-dehydro-4-deoxyglucarate dehydratase from Bradyrhizobium diazoefficiens (strain JCM 10833 / BCRC 13528 / IAM 13628 / NBRC 14792 / USDA 110).